The sequence spans 465 residues: RuvB-like helicase 2 (465 aa).

ATP is bound at residue glycine 72–threonine 79.

The protein belongs to the RuvB family. As to quaternary structure, may form heterododecamers with RVB1. Component of the SWR1 chromatin remodeling complex, the INO80 chromatin remodeling complex, and of the R2TP complex. Interacts with dil1.

The protein localises to the nucleus. The enzyme catalyses ATP + H2O = ADP + phosphate + H(+). Its function is as follows. DNA helicase which participates in several chromatin remodeling complexes, including the SWR1 and the INO80 complexes. The SWR1 complex mediates the ATP-dependent exchange of histone H2A for the H2A variant HZT1 leading to transcriptional regulation of selected genes by chromatin remodeling. The INO80 complex remodels chromatin by shifting nucleosomes and is involved in DNA repair. Also involved in pre-rRNA processing. In Schizosaccharomyces pombe (strain 972 / ATCC 24843) (Fission yeast), this protein is RuvB-like helicase 2 (rvb2).